A 214-amino-acid chain; its full sequence is Octanoyltransferase (214 aa).

A BPL/LPL catalytic domain is found at 35 to 211 (KSNIDFIWLG…IIQEEFYFNF (177 aa)). Substrate is bound by residues 75 to 82 (RGGEVTCH), 142 to 144 (SIG), and 155 to 157 (GFS). Cys-173 (acyl-thioester intermediate) is an active-site residue.

The protein belongs to the LipB family.

The protein resides in the cytoplasm. It carries out the reaction octanoyl-[ACP] + L-lysyl-[protein] = N(6)-octanoyl-L-lysyl-[protein] + holo-[ACP] + H(+). It participates in protein modification; protein lipoylation via endogenous pathway; protein N(6)-(lipoyl)lysine from octanoyl-[acyl-carrier-protein]: step 1/2. In terms of biological role, catalyzes the transfer of endogenously produced octanoic acid from octanoyl-acyl-carrier-protein onto the lipoyl domains of lipoate-dependent enzymes. Lipoyl-ACP can also act as a substrate although octanoyl-ACP is likely to be the physiological substrate. The protein is Octanoyltransferase of Prochlorococcus marinus (strain MIT 9515).